Reading from the N-terminus, the 882-residue chain is Pyruvate dehydrogenase E1 component (882 aa).

Homodimer. Part of the PDH complex, consisting of multiple copies of pyruvate dehydrogenase (E1), dihydrolipoamide acetyltransferase (E2) and lipoamide dehydrogenase (E3). Requires thiamine diphosphate as cofactor.

It catalyses the reaction N(6)-[(R)-lipoyl]-L-lysyl-[protein] + pyruvate + H(+) = N(6)-[(R)-S(8)-acetyldihydrolipoyl]-L-lysyl-[protein] + CO2. In terms of biological role, component of the pyruvate dehydrogenase (PDH) complex, that catalyzes the overall conversion of pyruvate to acetyl-CoA and CO(2). The chain is Pyruvate dehydrogenase E1 component (aceE) from Pseudomonas aeruginosa (strain ATCC 15692 / DSM 22644 / CIP 104116 / JCM 14847 / LMG 12228 / 1C / PRS 101 / PAO1).